A 333-amino-acid chain; its full sequence is Protoheme IX farnesyltransferase (333 aa).

The next 8 helical transmembrane spans lie at 63–83, 109–129, 132–152, 160–180, 188–208, 214–234, 245–265, and 292–312; these read LACTLGGGALAAAAAGVLNCI, AAFIGAISCTLAAAALLVSGV, LAAGLSLLGLCSYVLLYTAIL, IVIGGVAGAIPPLVGAAAASG, WLFSLVMLWTPAHFWALALLL, AVGIPMLPVIQGPVVTVRAIS, GFGVWALPEGGLLYGLLLIPF, and WSIFYMFGICLLLVVSRLPMA.

Belongs to the UbiA prenyltransferase family. Protoheme IX farnesyltransferase subfamily.

It is found in the cell inner membrane. It carries out the reaction heme b + (2E,6E)-farnesyl diphosphate + H2O = Fe(II)-heme o + diphosphate. It participates in porphyrin-containing compound metabolism; heme O biosynthesis; heme O from protoheme: step 1/1. Its function is as follows. Converts heme B (protoheme IX) to heme O by substitution of the vinyl group on carbon 2 of heme B porphyrin ring with a hydroxyethyl farnesyl side group. The sequence is that of Protoheme IX farnesyltransferase from Prochlorococcus marinus (strain MIT 9313).